A 400-amino-acid polypeptide reads, in one-letter code: Formate-dependent phosphoribosylglycinamide formyltransferase (400 aa).

Residues 22–23 (EL) and E82 each bind N(1)-(5-phospho-beta-D-ribosyl)glycinamide. Residues R115, K157, 162-167 (SSGKGQ), 197-200 (EGFV), and E205 contribute to the ATP site. One can recognise an ATP-grasp domain in the interval 120–315 (RLAAETLGLP…EFELHARAIL (196 aa)). Mg(2+)-binding residues include E274 and E286. Residues D293, K362, and 369-370 (RR) each bind N(1)-(5-phospho-beta-D-ribosyl)glycinamide.

The protein belongs to the PurK/PurT family. In terms of assembly, homodimer.

The catalysed reaction is N(1)-(5-phospho-beta-D-ribosyl)glycinamide + formate + ATP = N(2)-formyl-N(1)-(5-phospho-beta-D-ribosyl)glycinamide + ADP + phosphate + H(+). The protein operates within purine metabolism; IMP biosynthesis via de novo pathway; N(2)-formyl-N(1)-(5-phospho-D-ribosyl)glycinamide from N(1)-(5-phospho-D-ribosyl)glycinamide (formate route): step 1/1. Involved in the de novo purine biosynthesis. Catalyzes the transfer of formate to 5-phospho-ribosyl-glycinamide (GAR), producing 5-phospho-ribosyl-N-formylglycinamide (FGAR). Formate is provided by PurU via hydrolysis of 10-formyl-tetrahydrofolate. This chain is Formate-dependent phosphoribosylglycinamide formyltransferase, found in Mycolicibacterium gilvum (strain PYR-GCK) (Mycobacterium gilvum (strain PYR-GCK)).